The following is a 358-amino-acid chain: Ganglioside-induced differentiation-associated protein 1 (358 aa).

Residues 24–105 (VHLILYHWTH…YLEQTFLDER (82 aa)) enclose the GST N-terminal domain. Glycyl lysine isopeptide (Lys-Gly) (interchain with G-Cter in ubiquitin) cross-links involve residues Lys50, Lys172, Lys173, Lys188, and Lys190. The region spanning 153–309 (PAYATTRIRS…LISAVLPTAF (157 aa)) is the GST C-terminal domain. At Lys203 the chain carries N6-acetyllysine; alternate. A Glycyl lysine isopeptide (Lys-Gly) (interchain with G-Cter in ubiquitin); alternate cross-link involves residue Lys203. Glycyl lysine isopeptide (Lys-Gly) (interchain with G-Cter in ubiquitin) cross-links involve residues Lys206, Lys207, and Lys214. A run of 2 helical transmembrane segments spans residues 292 to 312 (VLGHVNNILISAVLPTAFRVA) and 320 to 340 (LGSTLVVGLLVGMGYFAFMLF). The segment at 320–358 (LGSTLVVGLLVGMGYFAFMLFRRRLGSMILALRPRPNYF) is required for mitochondrial localization.

It belongs to the GST superfamily. In terms of assembly, homodimer. Post-translationally, ubiquitinated by PRKN during mitophagy, leading to its degradation and enhancement of mitophagy. Deubiquitinated by USP30. Expressed in brain, spinal cord, muscles and intestinal villi. In the central nervous system expressed most prominently in the cortex, cerebellum, thalamus, olfactory bulb, and spinal cord. Expressed also in sciatic nerves and in dorsal root ganglia.

It is found in the mitochondrion outer membrane. Its subcellular location is the cytoplasm. Its function is as follows. Regulates the mitochondrial network by promoting mitochondrial fission. This is Ganglioside-induced differentiation-associated protein 1 (Gdap1) from Mus musculus (Mouse).